We begin with the raw amino-acid sequence, 148 residues long: Transcriptional regulator MraZ (148 aa).

SpoVT-AbrB domains lie at 5 to 51 and 80 to 123; these read VSIL…PEPN and AETL…NAEE.

Belongs to the MraZ family. Forms oligomers.

Its subcellular location is the cytoplasm. It localises to the nucleoid. The sequence is that of Transcriptional regulator MraZ from Chromobacterium violaceum (strain ATCC 12472 / DSM 30191 / JCM 1249 / CCUG 213 / NBRC 12614 / NCIMB 9131 / NCTC 9757 / MK).